The sequence spans 431 residues: Enolase (431 aa).

Gln-168 serves as a coordination point for (2R)-2-phosphoglycerate. The active-site Proton donor is Glu-210. Asp-247, Glu-291, and Asp-318 together coordinate Mg(2+). (2R)-2-phosphoglycerate-binding residues include Lys-343, Arg-372, Ser-373, and Lys-394. Lys-343 acts as the Proton acceptor in catalysis.

The protein belongs to the enolase family. As to quaternary structure, component of the RNA degradosome, a multiprotein complex involved in RNA processing and mRNA degradation. The cofactor is Mg(2+).

It is found in the cytoplasm. It localises to the secreted. The protein resides in the cell surface. It carries out the reaction (2R)-2-phosphoglycerate = phosphoenolpyruvate + H2O. It participates in carbohydrate degradation; glycolysis; pyruvate from D-glyceraldehyde 3-phosphate: step 4/5. Catalyzes the reversible conversion of 2-phosphoglycerate (2-PG) into phosphoenolpyruvate (PEP). It is essential for the degradation of carbohydrates via glycolysis. The polypeptide is Enolase (Acinetobacter baumannii (strain SDF)).